The sequence spans 344 residues: Calcium homeostasis modulator protein 3 (344 aa).

Residues 1 to 20 (MDKFRMLFQHFQSSSESVMN) are Cytoplasmic-facing. Positions 9–36 (QHFQSSSESVMNGICLLLAAVTVKLYSS) are central pore. The chain crosses the membrane as a helical span at residues 21-36 (GICLLLAAVTVKLYSS). At 37 to 48 (FDFNCPCLVHYN) the chain is on the extracellular side. Disulfide bonds link cysteine 41–cysteine 126 and cysteine 43–cysteine 157. The chain crosses the membrane as a helical span at residues 49 to 71 (ALYGLGLLLTPPLALFLCGLLAN). Residues 72–98 (RQSVVMVEEWRRPAGHRRKDPGIIRYM) lie on the Cytoplasmic side of the membrane. A lipid anchor (S-palmitoyl cysteine) is attached at cysteine 99. The helical transmembrane segment at 99-124 (CSSVLQRALAAPLVWILLALLDGKCF) threads the bilayer. Topologically, residues 125–176 (VCAFSSSVDPEKFLDFANMTPSQVQLFLAKVPCKEDELVRDSPARKAVSRYL) are extracellular. An N-linked (GlcNAc...) asparagine glycan is attached at asparagine 142. The chain crosses the membrane as a helical span at residues 177-202 (RCLSQAIGWSVTLLLIIAAFLARCLR). Residues cysteine 200 and cysteine 204 are each lipidated (S-palmitoyl cysteine). Topologically, residues 203 to 344 (PCFDQTVFLQ…GTRLSQHTDV (142 aa)) are cytoplasmic.

This sequence belongs to the CALHM family. In terms of assembly, associates with CALHM1 as a pore-forming subunit in a hetero-hexameric channel complex. N-glycosylated. Post-translationally, palmitoylated by ZDHHC3 and ZDHHC15. Palmitoylation positively regulates CALHM1:CALHM3 channel conductance. As to expression, specifically expressed in circumvallate taste bud cells.

The protein localises to the basolateral cell membrane. The enzyme catalyses ATP(in) = ATP(out). It catalyses the reaction Ca(2+)(in) = Ca(2+)(out). It carries out the reaction Na(+)(in) = Na(+)(out). The catalysed reaction is K(+)(in) = K(+)(out). The enzyme catalyses chloride(in) = chloride(out). In terms of biological role, pore-forming subunit of gustatory voltage-gated ion channels required for sensory perception of sweet, bitter and umami tastes. With CALHM1 forms a fast-activating voltage-gated ATP-release channel in type II taste bud cells, ATP acting as a neurotransmitter to activate afferent neural gustatory pathways. Acts both as a voltage-gated and calcium-activated ion channel: mediates neuronal excitability in response to membrane depolarization and low extracellular Ca(2+) concentration. Has poor ion selectivity and forms a wide pore (around 14 Angstroms) that mediates permeation of small ions including Ca(2+), Na(+), K(+) and Cl(-), as well as larger ions such as ATP(4-). The chain is Calcium homeostasis modulator protein 3 from Homo sapiens (Human).